Here is a 92-residue protein sequence, read N- to C-terminus: YcgL domain-containing protein VC_1957 (92 aa).

A YcgL domain is found at 1–84; sequence MLCSIYKSPK…PPENLLEQHK (84 aa). The interval 69–92 is disordered; it reads FLQLPPPPENLLEQHKERKARQTP.

The sequence is that of YcgL domain-containing protein VC_1957 from Vibrio cholerae serotype O1 (strain ATCC 39315 / El Tor Inaba N16961).